We begin with the raw amino-acid sequence, 127 residues long: Fumarate reductase subunit C (127 aa).

Transmembrane regions (helical) follow at residues 30-50, 58-78, and 107-127; these read ATVL…GCLV, GWLA…ALLG, and IIVL…LIVV.

Belongs to the FrdC family. As to quaternary structure, part of an enzyme complex containing four subunits: a flavoprotein (FrdA), an iron-sulfur protein (FrdB), and two hydrophobic anchor proteins (FrdC and FrdD).

The protein localises to the cell inner membrane. Its function is as follows. Anchors the catalytic components of the fumarate reductase complex to the cell membrane, binds quinones. The sequence is that of Fumarate reductase subunit C from Vibrio parahaemolyticus serotype O3:K6 (strain RIMD 2210633).